A 54-amino-acid polypeptide reads, in one-letter code: Glutathione S-transferase 6.7 (54 aa).

Belongs to the GST superfamily. Theta family. As to quaternary structure, homodimer. The N-terminus is blocked.

It is found in the cytoplasm. It catalyses the reaction RX + glutathione = an S-substituted glutathione + a halide anion + H(+). In terms of biological role, conjugation of reduced glutathione to a wide number of exogenous and endogenous hydrophobic electrophiles. This is Glutathione S-transferase 6.7 from Dicentrarchus labrax (European seabass).